A 185-amino-acid polypeptide reads, in one-letter code: Ribosome-recycling factor (185 aa).

It belongs to the RRF family.

The protein resides in the cytoplasm. Its function is as follows. Responsible for the release of ribosomes from messenger RNA at the termination of protein biosynthesis. May increase the efficiency of translation by recycling ribosomes from one round of translation to another. This is Ribosome-recycling factor from Yersinia pseudotuberculosis serotype O:1b (strain IP 31758).